Consider the following 22-residue polypeptide: Brain peptide MVPVPVHHMADELLRNGPDTVI (22 aa).

The protein is Brain peptide MVPVPVHHMADELLRNGPDTVI of Apis mellifera (Honeybee).